The following is a 397-amino-acid chain: MEQTWRWYGPNDPVSLDDIRQAGATGVVTALHHIPNGVVWPVSEIKQRQAELAAKNLVWSVVESVPIHEDIKTHSGNYQQYIENYQQTLRNIAECGIDTVCYNFMPILDWTRTDLEYELPDGSKALRFDQIAFAAFELHILKRPGASNDYTAEEQVQAEAYFNAMTEADIAKLTGNIIAGLPGAEEGYTLDQFRARLAEYDGIDKAQLRENMAYFLRAIIPVAEQVGLRMAVHPDDPPRPILGLPRIVSTIEDMQWLKETVDSIHNGFTMCTGSYGVRADNDLVKMIETFGDRIHFTHLRSTCREGNPKTFHEGGHLQGDVDMYSVVKAILTEEQRRQSLGDMRPIPMRPDHGHQMLDDLHKKTNPGYSAIGRLKGLAEVRGVELALKRTFFPDLKQ.

Belongs to the mannonate dehydratase family. It depends on Fe(2+) as a cofactor. Mn(2+) is required as a cofactor.

It carries out the reaction D-mannonate = 2-dehydro-3-deoxy-D-gluconate + H2O. The protein operates within carbohydrate metabolism; pentose and glucuronate interconversion. Catalyzes the dehydration of D-mannonate. This chain is Mannonate dehydratase, found in Yersinia pseudotuberculosis serotype O:1b (strain IP 31758).